Here is a 373-residue protein sequence, read N- to C-terminus: Carbamoyl phosphate synthase small chain (373 aa).

A CPSase region spans residues 1 to 179; it reads MSGKAQLVLE…AYIVEPEGPP (179 aa). L-glutamine contacts are provided by S47, G230, and G232. Residues 182-373 form the Glutamine amidotransferase type-1 domain; it reads TVAALDLGIK…QFIELMEGDR (192 aa). The active-site Nucleophile is C258. Residues F259, Q262, N300, G302, and F303 each contribute to the L-glutamine site. Catalysis depends on residues H348 and E350.

Belongs to the CarA family. In terms of assembly, composed of two chains; the small (or glutamine) chain promotes the hydrolysis of glutamine to ammonia, which is used by the large (or ammonia) chain to synthesize carbamoyl phosphate. Tetramer of heterodimers (alpha,beta)4.

The enzyme catalyses hydrogencarbonate + L-glutamine + 2 ATP + H2O = carbamoyl phosphate + L-glutamate + 2 ADP + phosphate + 2 H(+). It carries out the reaction L-glutamine + H2O = L-glutamate + NH4(+). It functions in the pathway amino-acid biosynthesis; L-arginine biosynthesis; carbamoyl phosphate from bicarbonate: step 1/1. It participates in pyrimidine metabolism; UMP biosynthesis via de novo pathway; (S)-dihydroorotate from bicarbonate: step 1/3. Small subunit of the glutamine-dependent carbamoyl phosphate synthetase (CPSase). CPSase catalyzes the formation of carbamoyl phosphate from the ammonia moiety of glutamine, carbonate, and phosphate donated by ATP, constituting the first step of 2 biosynthetic pathways, one leading to arginine and/or urea and the other to pyrimidine nucleotides. The small subunit (glutamine amidotransferase) binds and cleaves glutamine to supply the large subunit with the substrate ammonia. The sequence is that of Carbamoyl phosphate synthase small chain from Mycolicibacterium paratuberculosis (strain ATCC BAA-968 / K-10) (Mycobacterium paratuberculosis).